The following is a 303-amino-acid chain: GTPase Era (303 aa).

The Era-type G domain maps to 8–176 (YCGFIAIVGR…ASIVRKHMPE (169 aa)). The G1 stretch occupies residues 16–23 (GRPNVGKS). Residue 16–23 (GRPNVGKS) participates in GTP binding. The interval 42–46 (QTTRH) is G2. The interval 63 to 66 (DTPG) is G3. Residues 63–67 (DTPGL) and 125–128 (NKVD) each bind GTP. Residues 125–128 (NKVD) form a G4 region. Positions 155–157 (ISA) are G5. A KH type-2 domain is found at 207 to 284 (LGEELPYSVT…HLELWVKVKS (78 aa)).

It belongs to the TRAFAC class TrmE-Era-EngA-EngB-Septin-like GTPase superfamily. Era GTPase family. As to quaternary structure, monomer.

It localises to the cytoplasm. It is found in the cell inner membrane. An essential GTPase that binds both GDP and GTP, with rapid nucleotide exchange. Plays a role in 16S rRNA processing and 30S ribosomal subunit biogenesis and possibly also in cell cycle regulation and energy metabolism. This is GTPase Era from Yersinia pseudotuberculosis serotype O:1b (strain IP 31758).